An 80-amino-acid polypeptide reads, in one-letter code: MFDAMTDAVTQDMSKILQTKAADLSGERLRNVEAALDATAQQIRGHWSAASDQAARSDFSVLHDGITAARNIVVHIASMR.

Functionally, involved in the regulation of several genes of the hrp-hrc-hpa cluster, which encodes a type III secretion system (T3SS). Upregulates the expression of hpa2, hpa1 and hpaB and partially controls the expression of hrcC and hrcT. Controls the secretion of the T3SS TAL effector AvrXa27. Also regulates the expression of several HrpX-regulated protein (Xrp) genes. Has no influence on hrpG or hrpX expression. The chain is Regulatory protein HrpD6 from Xanthomonas oryzae pv. oryzicola.